The sequence spans 181 residues: MRIAFFLLVLAVIIGFAYGYSCPKPCYGNMCCSTSPNNQYYLTDFCGSTSACGPVPSCSGALYFTADSQRFGCGKYLNLCRSGKCVKAQIYDAGPAMWVEQDAGMMIIDASPTICHVLTGGSSCGWSDHFLITATVTSLTDSRPLGPFNVTESEMAQLFIDHEIAMAQCEAEKTCNGFDLE.

Residues 1–19 (MRIAFFLLVLAVIIGFAYG) form the signal peptide. A propeptide spanning residues 139–181 (LTDSRPLGPFNVTESEMAQLFIDHEIAMAQCEAEKTCNGFDLE) is cleaved from the precursor.

It belongs to the dictyostelium lysozyme family. In terms of processing, contains six disulfide bonds.

It localises to the cytoplasmic vesicle lumen. The catalysed reaction is Hydrolysis of 1,4-beta-linkages between N-acetylmuramic acid and N-acetyl-D-glucosamine residues in a peptidoglycan.. Its function is as follows. Has antibacterial activity against the Gram-positive bacteria B.subtilis, B.megaterium and M.luteus. No antibacterial activity detected against the Gram-positive bacterium S.aureus or against the Gram-negative bacterium E.coli. Lacks chitinase activity. The sequence is that of Lysozyme A from Dictyostelium discoideum (Social amoeba).